Reading from the N-terminus, the 65-residue chain is Large ribosomal subunit protein bL35 (65 aa).

The tract at residues 28-53 (NGSHNLEKKNRKRTRRLHQSTMLDNA) is disordered. Positions 36–45 (KNRKRTRRLH) are enriched in basic residues.

This sequence belongs to the bacterial ribosomal protein bL35 family.

The chain is Large ribosomal subunit protein bL35 from Chlorobium luteolum (strain DSM 273 / BCRC 81028 / 2530) (Pelodictyon luteolum).